The sequence spans 838 residues: Protein P (838 aa).

Positions 1–179 are terminal protein domain (TP); that stretch reads MPLSYQHFRK…FCGSPYSWEQ (179 aa). A spacer region spans residues 180–341; that stretch reads ELQHSQRHGD…YCLSHLVNLR (162 aa). Residues 219–245 form a disordered region; that stretch reads GLQPHQGPLASSQPGRSGSIRARAHPS. The polymerase/reverse transcriptase domain (RT) stretch occupies residues 342-685; the sequence is EDWGPCDDHG…YMNLYPVARQ (344 aa). Residues 352–595 form the Reverse transcriptase domain; sequence EHHIRIPRTP…YSLNFMGYII (244 aa). Mg(2+) is bound by residues Asp424, Asp546, and Asp547.

This sequence belongs to the hepadnaviridae P protein family.

The catalysed reaction is DNA(n) + a 2'-deoxyribonucleoside 5'-triphosphate = DNA(n+1) + diphosphate. The enzyme catalyses Endonucleolytic cleavage to 5'-phosphomonoester.. Its activity is regulated as follows. Activated by host HSP70 and HSP40 in vitro to be able to bind the epsilon loop of the pgRNA. Because deletion of the RNase H region renders the protein partly chaperone-independent, the chaperones may be needed indirectly to relieve occlusion of the RNA-binding site by this domain. Inhibited by several reverse-transcriptase inhibitors: Lamivudine, Adefovir and Entecavir. In terms of biological role, multifunctional enzyme that converts the viral RNA genome into dsDNA in viral cytoplasmic capsids. This enzyme displays a DNA polymerase activity that can copy either DNA or RNA templates, and a ribonuclease H (RNase H) activity that cleaves the RNA strand of RNA-DNA heteroduplexes in a partially processive 3'- to 5'-endonucleasic mode. Neo-synthesized pregenomic RNA (pgRNA) are encapsidated together with the P protein, and reverse-transcribed inside the nucleocapsid. Initiation of reverse-transcription occurs first by binding the epsilon loop on the pgRNA genome, and is initiated by protein priming, thereby the 5'-end of (-)DNA is covalently linked to P protein. Partial (+)DNA is synthesized from the (-)DNA template and generates the relaxed circular DNA (RC-DNA) genome. After budding and infection, the RC-DNA migrates in the nucleus, and is converted into a plasmid-like covalently closed circular DNA (cccDNA). The activity of P protein does not seem to be necessary for cccDNA generation, and is presumably released from (+)DNA by host nuclear DNA repair machinery. This Hepatitis B virus genotype A2 subtype adw (isolate Japan/Nishioka/1983) (HBV-A) protein is Protein P.